Here is a 364-residue protein sequence, read N- to C-terminus: tRNA N6-adenosine threonylcarbamoyltransferase (364 aa).

2 residues coordinate Fe cation: His118 and His122. Substrate contacts are provided by residues 140-144 (LVSGG), Asp173, Gly186, and Asn288. Asp316 contacts Fe cation.

It belongs to the KAE1 / TsaD family. Requires Fe(2+) as cofactor.

It localises to the cytoplasm. The catalysed reaction is L-threonylcarbamoyladenylate + adenosine(37) in tRNA = N(6)-L-threonylcarbamoyladenosine(37) in tRNA + AMP + H(+). Its function is as follows. Required for the formation of a threonylcarbamoyl group on adenosine at position 37 (t(6)A37) in tRNAs that read codons beginning with adenine. Is involved in the transfer of the threonylcarbamoyl moiety of threonylcarbamoyl-AMP (TC-AMP) to the N6 group of A37, together with TsaE and TsaB. TsaD likely plays a direct catalytic role in this reaction. The protein is tRNA N6-adenosine threonylcarbamoyltransferase of Cereibacter sphaeroides (strain ATCC 17023 / DSM 158 / JCM 6121 / CCUG 31486 / LMG 2827 / NBRC 12203 / NCIMB 8253 / ATH 2.4.1.) (Rhodobacter sphaeroides).